We begin with the raw amino-acid sequence, 233 residues long: Nucleoside diphosphate kinase 2, chloroplastic (233 aa).

The N-terminal 67 residues, 1-67 (MEAMSGLSSP…LISHSLPRKK (67 aa)), are a transit peptide targeting the chloroplast. The ATP site is built by lysine 93, phenylalanine 141, arginine 169, threonine 175, arginine 186, and asparagine 196. The active-site Pros-phosphohistidine intermediate is histidine 199.

The protein belongs to the NDK family. Mg(2+) is required as a cofactor.

The protein resides in the plastid. It localises to the chloroplast. It catalyses the reaction a 2'-deoxyribonucleoside 5'-diphosphate + ATP = a 2'-deoxyribonucleoside 5'-triphosphate + ADP. The enzyme catalyses a ribonucleoside 5'-diphosphate + ATP = a ribonucleoside 5'-triphosphate + ADP. Its function is as follows. Major role in the synthesis of nucleoside triphosphates other than ATP. The ATP gamma phosphate is transferred to the NDP beta phosphate via a ping-pong mechanism, using a phosphorylated active-site intermediate. The sequence is that of Nucleoside diphosphate kinase 2, chloroplastic (NDPK2) from Spinacia oleracea (Spinach).